The primary structure comprises 152 residues: UPF0178 protein YaiI (152 aa).

The protein belongs to the UPF0178 family.

In Escherichia coli O81 (strain ED1a), this protein is UPF0178 protein YaiI.